The chain runs to 293 residues: Succinate--CoA ligase [ADP-forming] subunit alpha (293 aa).

Residues 21-24 (TGKQ), Lys47, and 99-101 (ITE) contribute to the CoA site. Residue Tyr162 coordinates substrate. The Tele-phosphohistidine intermediate role is filled by His249.

It belongs to the succinate/malate CoA ligase alpha subunit family. As to quaternary structure, heterotetramer of two alpha and two beta subunits.

It carries out the reaction succinate + ATP + CoA = succinyl-CoA + ADP + phosphate. It catalyses the reaction GTP + succinate + CoA = succinyl-CoA + GDP + phosphate. The protein operates within carbohydrate metabolism; tricarboxylic acid cycle; succinate from succinyl-CoA (ligase route): step 1/1. Functionally, succinyl-CoA synthetase functions in the citric acid cycle (TCA), coupling the hydrolysis of succinyl-CoA to the synthesis of either ATP or GTP and thus represents the only step of substrate-level phosphorylation in the TCA. The alpha subunit of the enzyme binds the substrates coenzyme A and phosphate, while succinate binding and nucleotide specificity is provided by the beta subunit. This Methanothermobacter thermautotrophicus (strain ATCC 29096 / DSM 1053 / JCM 10044 / NBRC 100330 / Delta H) (Methanobacterium thermoautotrophicum) protein is Succinate--CoA ligase [ADP-forming] subunit alpha.